The following is a 331-amino-acid chain: Ferredoxin--NADP reductase (331 aa).

Residues glutamate 34, glutamine 42, tyrosine 47, valine 87, phenylalanine 120, aspartate 285, and threonine 325 each contribute to the FAD site.

This sequence belongs to the ferredoxin--NADP reductase type 2 family. Homodimer. FAD serves as cofactor.

The enzyme catalyses 2 reduced [2Fe-2S]-[ferredoxin] + NADP(+) + H(+) = 2 oxidized [2Fe-2S]-[ferredoxin] + NADPH. In Levilactobacillus brevis (strain ATCC 367 / BCRC 12310 / CIP 105137 / JCM 1170 / LMG 11437 / NCIMB 947 / NCTC 947) (Lactobacillus brevis), this protein is Ferredoxin--NADP reductase.